The primary structure comprises 222 residues: MEHDGSLGRMLRFCEWIMRFAYTNLLWLFFTLLGLGVFGIMPATAALFAVMRKWIQGQDNVPVLKTFWQEYKGEFFRSNLLGAVLALIGVIIYIDLALIYPSHFLLHILRFAIMIFGFLFVSMLFYVFPLLVHFDWKKRLYVKFSLLLSVAYLQYTLTMLALTVALFFLLAYLPGIVPFFSVSLISYCHMRIVYAVLLKVEQHGGEPQRKSHIRKAFYPETR.

Helical transmembrane passes span 25–45, 80–100, 111–131, and 160–180; these read LLWLFFTLLGLGVFGIMPATA, LLGAVLALIGVIIYIDLALIY, FAIMIFGFLFVSMLFYVFPLL, and LALTVALFFLLAYLPGIVPFF.

The protein localises to the cell membrane. This is an uncharacterized protein from Bacillus subtilis (strain 168).